A 121-amino-acid polypeptide reads, in one-letter code: Flagellar protein FliT (121 aa).

The interval 1 to 50 is required for homodimerization; it reads MNNAPHLYFAWQQLVEKSQLMLRLATEEQWDELITSEMAYVNAVQEIAHL. The tract at residues 60–98 is fliD binding; sequence MQEQLRPMLRLILDNESKVKQLLQIRMDELAKLVGQSSV.

Belongs to the FliT family. Homodimer. Interacts with FliD and FlhC.

It localises to the cytoplasm. The protein localises to the cytosol. In terms of biological role, dual-function protein that regulates the transcription of class 2 flagellar operons and that also acts as an export chaperone for the filament-capping protein FliD. As a transcriptional regulator, acts as an anti-FlhDC factor; it directly binds FlhC, thus inhibiting the binding of the FlhC/FlhD complex to class 2 promoters, resulting in decreased expression of class 2 flagellar operons. As a chaperone, effects FliD transition to the membrane by preventing its premature polymerization, and by directing it to the export apparatus. This chain is Flagellar protein FliT, found in Escherichia coli (strain 55989 / EAEC).